The primary structure comprises 377 residues: MEVPRVGHSISSPTSPCEDMMKNLSLDAIQLCEREGNKSLDSGIAEMEELPVPQNIKISNITCDSFKICWDMDSRSKERITHYFIDLNKKENKNANKFKHKDVPTKLVAKAVPLPMTVRGHWFLSPRTEYTVAVQTASKQGDGDYAVSEWSEINEFCTADYSTVHLTQLMEKAEVIAGRMLRFSVFYRNQHKEYFDHAREAQNNKMLPSVKDNSGSHGSPISGKLEGIFFSCNTEFNTGKPPQDSPYGRYRYQLPAEALFSPKTNLYFGDFYCMYTAYHYVILVIAPQGSPGDDFCKQRLPALDIANNRFMTCSEDEDGQLVFHHAQDLILEVIYTDPVDLSLGTVAEISGHQLMSLSTVNAKKDPSCKTCNISVGR.

The 110-residue stretch at 52–161 folds into the Fibronectin type-III domain; it reads VPQNIKISNI…EINEFCTADY (110 aa).

It belongs to the PHYHIP family.

Functionally, may play a role in the development of the central system. In Danio rerio (Zebrafish), this protein is Phytanoyl-CoA hydroxylase-interacting protein-like (phyhipl).